The following is a 52-amino-acid chain: Large ribosomal subunit protein eL39 (52 aa).

The protein belongs to the eukaryotic ribosomal protein eL39 family.

The sequence is that of Large ribosomal subunit protein eL39 from Caldivirga maquilingensis (strain ATCC 700844 / DSM 13496 / JCM 10307 / IC-167).